The primary structure comprises 336 residues: MSQPLNVAVVGATGSVGEALVGLLDERDFPLHRLHLLASAESAGQRMGFAESSLRVGDVDSFDFSSVGLAFFAAAAEVSRAHAERARAAGCSVIDLSGALEPSVAPPVMVSVNAERLASQAAPFLLSSPCAVAAELCEVLAPLLATLDCRQLNLTACLSVSSLGREGVKELARQTAELLNARPLEPRLFDRQIAFNLLAQVGAVDAEGHSAIERRIFAEVQALLGERIGPLNVTCIQAPVFFGDSLSVTLQCAEPVDLAAVTRVLDATKGIEWVGEGDYPTVVGDALGQDETYVGRVRAGQADPCQVNLWIVSDNVRKGAALNAVLLGELLIKHYL.

Belongs to the aspartate-semialdehyde dehydrogenase family.

The chain is USG-1 protein homolog (usg) from Pseudomonas aeruginosa (strain ATCC 15692 / DSM 22644 / CIP 104116 / JCM 14847 / LMG 12228 / 1C / PRS 101 / PAO1).